The following is a 982-amino-acid chain: Pentatricopeptide repeat-containing protein At5g62370 (982 aa).

24 PPR repeats span residues 94-129, 130-164, 165-199, 200-234, 236-270, 271-305, 306-340, 341-376, 377-411, 412-446, 476-510, 511-545, 546-580, 581-615, 616-650, 651-685, 686-720, 721-755, 759-789, 793-827, 828-858, 860-894, 895-929, and 930-964; these read DSSC…GIVP, DSSV…GYAP, SRNS…GSGL, WLWC…TRMP, PVNL…GYYV, DKVM…SFEL, DPCI…GVQS, NVFT…DISR, NVHC…GIVP, DHIT…GCGI, AAVG…GCTP, LPFS…DFVP, DVDT…GLRP, TVAI…GIQP, DEIA…FLRP, SSFT…GLSP, NVVL…DIKH, DHIA…KLLQ, RTKP…VKKS, NLYL…GIVP, NLVT…TNCE, DQVM…GINP, NKDS…DIWP, and RSIN…GRSL.

This sequence belongs to the PPR family. P subfamily.

The sequence is that of Pentatricopeptide repeat-containing protein At5g62370 from Arabidopsis thaliana (Mouse-ear cress).